The sequence spans 56 residues: Large ribosomal subunit protein bL33B (56 aa).

This sequence belongs to the bacterial ribosomal protein bL33 family.

This is Large ribosomal subunit protein bL33B from Cutibacterium acnes (strain DSM 16379 / KPA171202) (Propionibacterium acnes).